We begin with the raw amino-acid sequence, 418 residues long: Serine--tRNA ligase (418 aa).

227-229 (TSE) serves as a coordination point for L-serine. ATP contacts are provided by residues 258–260 (RRE) and V274. E281 is an L-serine binding site. 345–348 (ELTS) serves as a coordination point for ATP. L-serine is bound at residue T380.

The protein belongs to the class-II aminoacyl-tRNA synthetase family. Type-1 seryl-tRNA synthetase subfamily. In terms of assembly, homodimer. The tRNA molecule binds across the dimer.

It is found in the cytoplasm. It carries out the reaction tRNA(Ser) + L-serine + ATP = L-seryl-tRNA(Ser) + AMP + diphosphate + H(+). It catalyses the reaction tRNA(Sec) + L-serine + ATP = L-seryl-tRNA(Sec) + AMP + diphosphate + H(+). Its pathway is aminoacyl-tRNA biosynthesis; selenocysteinyl-tRNA(Sec) biosynthesis; L-seryl-tRNA(Sec) from L-serine and tRNA(Sec): step 1/1. Functionally, catalyzes the attachment of serine to tRNA(Ser). Is also able to aminoacylate tRNA(Sec) with serine, to form the misacylated tRNA L-seryl-tRNA(Sec), which will be further converted into selenocysteinyl-tRNA(Sec). The protein is Serine--tRNA ligase of Rhodococcus opacus (strain B4).